The sequence spans 160 residues: UPF0178 protein BPP1051 (160 aa).

The protein belongs to the UPF0178 family.

In Bordetella parapertussis (strain 12822 / ATCC BAA-587 / NCTC 13253), this protein is UPF0178 protein BPP1051.